Consider the following 261-residue polypeptide: MTHQTHAYHMVNPSPWPLTGALSALLMTSGLIMWFHFNSTTLLMLGLTTNMLTMYQWWRDVVRESTFQGHHTPNVQKGLRYGMILFIISEVLFFTGFFWAFYHSSLAPTPELGGCWPPTGIHPLNPLEVPLLNTSVLLASGVSITWAHHSLMEGNRNHMLQALFITIALGVYFTLLQASEYYEAPFTISDGVYGSTFFVATGFHGLHVIIGSTFLIVCFFRQLKFHFTSNHHFGFEAAAWYWHFVDVVWLFLYVSIYWWGS.

Residues 1 to 15 are Mitochondrial matrix-facing; that stretch reads MTHQTHAYHMVNPSP. Residues 16-34 form a helical membrane-spanning segment; it reads WPLTGALSALLMTSGLIMW. The Mitochondrial intermembrane portion of the chain corresponds to 35-40; the sequence is FHFNST. The chain crosses the membrane as a helical span at residues 41–66; that stretch reads TLLMLGLTTNMLTMYQWWRDVVREST. Residues 67–72 lie on the Mitochondrial matrix side of the membrane; that stretch reads FQGHHT. A helical transmembrane segment spans residues 73-105; it reads PNVQKGLRYGMILFIISEVLFFTGFFWAFYHSS. Residues 106–128 are Mitochondrial intermembrane-facing; the sequence is LAPTPELGGCWPPTGIHPLNPLE. Residues 129–152 form a helical membrane-spanning segment; it reads VPLLNTSVLLASGVSITWAHHSLM. Residues 153–155 lie on the Mitochondrial matrix side of the membrane; it reads EGN. A helical transmembrane segment spans residues 156–183; the sequence is RNHMLQALFITIALGVYFTLLQASEYYE. The Mitochondrial intermembrane portion of the chain corresponds to 184-190; sequence APFTISD. A helical transmembrane segment spans residues 191–223; it reads GVYGSTFFVATGFHGLHVIIGSTFLIVCFFRQL. Over 224-232 the chain is Mitochondrial matrix; it reads KFHFTSNHH. Residues 233-256 traverse the membrane as a helical segment; it reads FGFEAAAWYWHFVDVVWLFLYVSI. Residues 257–261 lie on the Mitochondrial intermembrane side of the membrane; the sequence is YWWGS.

It belongs to the cytochrome c oxidase subunit 3 family. Component of the cytochrome c oxidase (complex IV, CIV), a multisubunit enzyme composed of 14 subunits. The complex is composed of a catalytic core of 3 subunits MT-CO1, MT-CO2 and MT-CO3, encoded in the mitochondrial DNA, and 11 supernumerary subunits COX4I, COX5A, COX5B, COX6A, COX6B, COX6C, COX7A, COX7B, COX7C, COX8 and NDUFA4, which are encoded in the nuclear genome. The complex exists as a monomer or a dimer and forms supercomplexes (SCs) in the inner mitochondrial membrane with NADH-ubiquinone oxidoreductase (complex I, CI) and ubiquinol-cytochrome c oxidoreductase (cytochrome b-c1 complex, complex III, CIII), resulting in different assemblies (supercomplex SCI(1)III(2)IV(1) and megacomplex MCI(2)III(2)IV(2)).

It localises to the mitochondrion inner membrane. The catalysed reaction is 4 Fe(II)-[cytochrome c] + O2 + 8 H(+)(in) = 4 Fe(III)-[cytochrome c] + 2 H2O + 4 H(+)(out). In terms of biological role, component of the cytochrome c oxidase, the last enzyme in the mitochondrial electron transport chain which drives oxidative phosphorylation. The respiratory chain contains 3 multisubunit complexes succinate dehydrogenase (complex II, CII), ubiquinol-cytochrome c oxidoreductase (cytochrome b-c1 complex, complex III, CIII) and cytochrome c oxidase (complex IV, CIV), that cooperate to transfer electrons derived from NADH and succinate to molecular oxygen, creating an electrochemical gradient over the inner membrane that drives transmembrane transport and the ATP synthase. Cytochrome c oxidase is the component of the respiratory chain that catalyzes the reduction of oxygen to water. Electrons originating from reduced cytochrome c in the intermembrane space (IMS) are transferred via the dinuclear copper A center (CU(A)) of subunit 2 and heme A of subunit 1 to the active site in subunit 1, a binuclear center (BNC) formed by heme A3 and copper B (CU(B)). The BNC reduces molecular oxygen to 2 water molecules using 4 electrons from cytochrome c in the IMS and 4 protons from the mitochondrial matrix. This Gazella cuvieri (Cuvier's gazelle) protein is Cytochrome c oxidase subunit 3 (MT-CO3).